Here is a 244-residue protein sequence, read N- to C-terminus: Ubiquitin carboxyl-terminal hydrolase mug105 (244 aa).

Cys42 functions as the Nucleophile in the catalytic mechanism. His165 functions as the Proton acceptor in the catalytic mechanism. Asp183 is an active-site residue.

This sequence belongs to the peptidase C78 family. ZUFSP subfamily.

Its subcellular location is the cytoplasm. It carries out the reaction Thiol-dependent hydrolysis of ester, thioester, amide, peptide and isopeptide bonds formed by the C-terminal Gly of ubiquitin (a 76-residue protein attached to proteins as an intracellular targeting signal).. In terms of biological role, deubiquitinase with endodeubiquitinase activity that preferentially cleaves 'Lys-48'-linked polyubiquitin chains. Shows only weak activity against 'Lys-63' and 'Lys-11'-linked chains. Has a role in meiosis. In Schizosaccharomyces pombe (strain 972 / ATCC 24843) (Fission yeast), this protein is Ubiquitin carboxyl-terminal hydrolase mug105 (mug105).